We begin with the raw amino-acid sequence, 425 residues long: Monoacylglycerol lipase ABHD2 (425 aa).

Topologically, residues 1–9 (MNAMMETSE) are cytoplasmic. The chain crosses the membrane as a helical; Signal-anchor for type II membrane protein span at residues 10–30 (LPAVFDGVKLAAVAAVLYVIV). Residues 31-425 (RCLNLKSPTA…DTELVEADLE (395 aa)) lie on the Extracellular side of the membrane. Residues 128–382 (MVICPGIANH…HGGHLGFFEG (255 aa)) form the AB hydrolase-1 domain. Asn-136 is a glycosylation site (N-linked (GlcNAc...) asparagine). The active-site Nucleophile is Ser-207. Catalysis depends on charge relay system residues Asp-345 and His-376. N-linked (GlcNAc...) asparagine glycosylation occurs at Asn-410.

It belongs to the AB hydrolase superfamily. AB hydrolase 4 family.

It is found in the cell membrane. The enzyme catalyses Hydrolyzes glycerol monoesters of long-chain fatty acids.. The catalysed reaction is an acetyl ester + H2O = an aliphatic alcohol + acetate + H(+). It catalyses the reaction a triacylglycerol + H2O = a diacylglycerol + a fatty acid + H(+). It carries out the reaction 2-(5Z,8Z,11Z,14Z-eicosatetraenoyl)-glycerol + H2O = glycerol + (5Z,8Z,11Z,14Z)-eicosatetraenoate + H(+). The enzyme catalyses a butanoate ester + H2O = an aliphatic alcohol + butanoate + H(+). The catalysed reaction is hexadecanoate ester + H2O = an aliphatic alcohol + hexadecanoate + H(+). With respect to regulation, acylglycerol lipase activity is activated upon binding to progesterone. Functionally, progesterone-dependent acylglycerol lipase that catalyzes hydrolysis of endocannabinoid arachidonoylglycerol (AG) from cell membrane. Acts as a progesterone receptor: progesterone-binding activates the acylglycerol lipase activity, mediating degradation of 1-arachidonoylglycerol (1AG) and 2-arachidonoylglycerol (2AG) to glycerol and arachidonic acid (AA). Also displays an ester hydrolase activity against acetyl ester, butanoate ester and hexadecanoate ester. Plays a key role in sperm capacitation in response to progesterone by mediating degradation of 2AG, an inhibitor of the sperm calcium channel CatSper, leading to calcium influx via CatSper and sperm activation. May also play a role in smooth muscle cells migration. The chain is Monoacylglycerol lipase ABHD2 (ABHD2) from Bos taurus (Bovine).